We begin with the raw amino-acid sequence, 123 residues long: Small ribosomal subunit protein uS12 (123 aa).

Positions 1–32 (MPTIQQLVRKGRKTKVSKNKTPALKGSPQRRG) are disordered. A compositionally biased stretch (basic residues) spans 9-18 (RKGRKTKVSK). At Asp89 the chain carries 3-methylthioaspartic acid.

Belongs to the universal ribosomal protein uS12 family. As to quaternary structure, part of the 30S ribosomal subunit. Contacts proteins S8 and S17. May interact with IF1 in the 30S initiation complex.

Functionally, with S4 and S5 plays an important role in translational accuracy. In terms of biological role, interacts with and stabilizes bases of the 16S rRNA that are involved in tRNA selection in the A site and with the mRNA backbone. Located at the interface of the 30S and 50S subunits, it traverses the body of the 30S subunit contacting proteins on the other side and probably holding the rRNA structure together. The combined cluster of proteins S8, S12 and S17 appears to hold together the shoulder and platform of the 30S subunit. The chain is Small ribosomal subunit protein uS12 from Thermobifida fusca (strain YX).